Reading from the N-terminus, the 662-residue chain is UvrABC system protein B (662 aa).

In terms of domain architecture, Helicase ATP-binding spans 25 to 414; that stretch reads TGLNSKKRSQ…GTVVELIIRP (390 aa). Position 38–45 (38–45) interacts with ATP; that stretch reads GITGSGKT. Residues 91–114 carry the Beta-hairpin motif; that stretch reads YYDYYQPESYIVRTDTFIEKDSSI. One can recognise a Helicase C-terminal domain in the interval 430 to 592; the sequence is QVEDLISEIQ…IIPKTINRAI (163 aa). The UVR domain occupies 622-657; the sequence is KAHMDKLKKEMFKAASNLEFEQAAKLRNQLKALEEA.

This sequence belongs to the UvrB family. Forms a heterotetramer with UvrA during the search for lesions. Interacts with UvrC in an incision complex.

It is found in the cytoplasm. The UvrABC repair system catalyzes the recognition and processing of DNA lesions. A damage recognition complex composed of 2 UvrA and 2 UvrB subunits scans DNA for abnormalities. Upon binding of the UvrA(2)B(2) complex to a putative damaged site, the DNA wraps around one UvrB monomer. DNA wrap is dependent on ATP binding by UvrB and probably causes local melting of the DNA helix, facilitating insertion of UvrB beta-hairpin between the DNA strands. Then UvrB probes one DNA strand for the presence of a lesion. If a lesion is found the UvrA subunits dissociate and the UvrB-DNA preincision complex is formed. This complex is subsequently bound by UvrC and the second UvrB is released. If no lesion is found, the DNA wraps around the other UvrB subunit that will check the other stand for damage. The polypeptide is UvrABC system protein B (Rickettsia prowazekii (strain Madrid E)).